The primary structure comprises 1007 residues: MAEAEEKRVGVGEARAPLAVEALRGKIVEKVKGNRVTLIVGDTGCGKSSMVPQFLLEENMEPILCTQPRRFAVVAIAQMIAESRNCQVGEEVGYHIGHSNVSNLNSKRSRIVFKTAGVVLEQMRDKGIAALNYKVIILDEIHERSVESDLVLACVKQFMMKKNDLRLILMSATADITRYKDYFRDLGRGERVEVIAIPSSPRSSIFQRKVLYLEQIVDILKMDSESLSTKYCSGPNTAADAGLKPDVYELIHRLLLHIHQNEPDIGKSILVFLPTYYALEQQWIRLLSASSMFKVHILHRSIDTDEALQTMKVSKSCRKVILATNIAESSVTIPGVAYVIDSCRSLQVYWDPIRKTDSAELVWVSKSQAEQRKGRTGRTCDGQIYRLVTGPFYNSLTDHEYPAILRLSLREQVLMICCAESRAMNDPHVLLQKVLDPPDSDVVEDALESLVQIRALDKPTSPRGRHEPTFYGCLLNSLPLSFDASVLALKFGDTGSICEGILISIMLDIQPLPIVQPFGHQQLCKMYRNNYFEEEGIDLQTGKKEAALVGNLCAFQFWQRMFKDKYRLDCLINVVNTHEPKASNGFVAKPEDEWCAFHNLVPTALNYISEIYDDIMGTLHRFRPSFLVKINPPMYLQPSEFHHMCLRHEVLELENVNSLPLEAENSHLDSHRRCAATPYVSPADFGTTTVVKTLKTLIKEMKTQSAADRVTYRELVHGYVQPALENEMCVFFLNGSCNRGDTCHFSHSSRAPRPICKFFLTLQGCRNGNSCSFSHDSGSLVSSSITSGICSQENRATSVCCKRLLPAAGDGHILVMNDKSLQFACKLCNYYDPTKIIACTPGPHSFESDSVTKGLKILQNLADPSYLFIGGEHKLSVPWTKLSRVFWFADIDSNESISEQVVLQKFFQHIAIKTLSEKMSDLQVIVIMNNAKFVQLQVERLARECFLFLGESFMFDEATLGWFSDTPNYPRGMQVSAPVAYIFSMHPPTGIQFGDYASELRKVLYSN.

The region spanning 28 to 192 is the Helicase ATP-binding domain; the sequence is VEKVKGNRVT…FRDLGRGERV (165 aa). An ATP-binding site is contributed by 41–48; sequence GDTGCGKS. The DEAH box signature appears at 139–142; the sequence is DEIH. One can recognise a Helicase C-terminal domain in the interval 250-420; the sequence is LIHRLLLHIH…EQVLMICCAE (171 aa). 2 consecutive C3H1-type zinc fingers follow at residues 723-750 and 751-778; these read ALENEMCVFFLNGSCNRGDTCHFSHSSR and APRPICKFFLTLQGCRNGNSCSFSHDSG.

The sequence is that of Zinc finger CCCH domain-containing protein 4 from Oryza sativa subsp. japonica (Rice).